Consider the following 363-residue polypeptide: S-adenosylmethionine:tRNA ribosyltransferase-isomerase (363 aa).

Belongs to the QueA family. As to quaternary structure, monomer.

The protein localises to the cytoplasm. It catalyses the reaction 7-aminomethyl-7-carbaguanosine(34) in tRNA + S-adenosyl-L-methionine = epoxyqueuosine(34) in tRNA + adenine + L-methionine + 2 H(+). The protein operates within tRNA modification; tRNA-queuosine biosynthesis. In terms of biological role, transfers and isomerizes the ribose moiety from AdoMet to the 7-aminomethyl group of 7-deazaguanine (preQ1-tRNA) to give epoxyqueuosine (oQ-tRNA). The sequence is that of S-adenosylmethionine:tRNA ribosyltransferase-isomerase from Pasteurella multocida (strain Pm70).